Here is a 91-residue protein sequence, read N- to C-terminus: Molybdopterin synthase sulfur carrier subunit (91 aa).

1-thioglycine; alternate is present on Gly-91. Residue Gly-91 is modified to Glycyl adenylate; alternate.

The protein belongs to the MoaD family. MOCS2A subfamily. In terms of assembly, heterotetramer; composed of 2 small (MOCS2A) and 2 large (MOCS2B) subunits. C-terminal thiocarboxylation occurs in 2 steps, it is first acyl-adenylated (-COAMP) via the hesA/moeB/thiF part of uba4, then thiocarboxylated (-COSH) via the rhodanese domain of uba4.

The protein localises to the cytoplasm. Its pathway is cofactor biosynthesis; molybdopterin biosynthesis. Acts as a sulfur carrier required for molybdopterin biosynthesis. Component of the molybdopterin synthase complex that catalyzes the conversion of precursor Z into molybdopterin by mediating the incorporation of 2 sulfur atoms into precursor Z to generate a dithiolene group. In the complex, serves as sulfur donor by being thiocarboxylated (-COSH) at its C-terminus by uba4. After interaction with MOCS2B, the sulfur is then transferred to precursor Z to form molybdopterin. In Emericella nidulans (strain FGSC A4 / ATCC 38163 / CBS 112.46 / NRRL 194 / M139) (Aspergillus nidulans), this protein is Molybdopterin synthase sulfur carrier subunit.